We begin with the raw amino-acid sequence, 133 residues long: Glycophorin-A (133 aa).

O-linked (GalNAc...) threonine glycans are attached at residues Thr1 and Thr6. The disordered stretch occupies residues 1 to 34 (TETPVTGEQGSATPGNVSNATVTAGKPSATSPGV). The Extracellular portion of the chain corresponds to 1 to 62 (TETPVTGEQG…SYHQDFSHAE (62 aa)). O-linked (GalNAc...) serine glycosylation is present at Ser11. O-linked (GalNAc...) threonine glycosylation is present at Thr13. Asn19 carries N-linked (GlcNAc...) asparagine glycosylation. O-linked (GalNAc...) threonine glycosylation is found at Thr21, Thr23, and Thr30. Ser31 is a glycosylation site (O-linked (GalNAc...) serine). A glycan (N-linked (GlcNAc...) asparagine) is linked at Asn39. Residues Thr41 and Thr48 are each glycosylated (O-linked (GalNAc...) threonine). The chain crosses the membrane as a helical span at residues 63 to 85 (ITGIIFAVMAGLLLIIFLIAYLI). Residues 86 to 133 (RRMIKKPLPVPKPQDSPDIGTENTADPSELQDTEDPPLTSVEIETPAS) are Cytoplasmic-facing. The disordered stretch occupies residues 93-133 (LPVPKPQDSPDIGTENTADPSELQDTEDPPLTSVEIETPAS).

The protein belongs to the glycophorin-A family. In terms of assembly, homodimer. Component of the ankyrin-1 complex in the erythrocyte, composed of ANK1, RHCE, RHAG, SLC4A1, EPB42, GYPA, GYPB and AQP1. Interacts with SLC4A1; a GYPA monomer is bound at each end of the SLC4A1 dimer forming a heterotetramer.

The protein localises to the membrane. Functionally, component of the ankyrin-1 complex, a multiprotein complex involved in the stability and shape of the erythrocyte membrane. Glycophorin A is the major intrinsic membrane protein of the erythrocyte. The N-terminal glycosylated segment, which lies outside the erythrocyte membrane, has MN blood group receptors. Appears to be important for the function of SLC4A1 and is required for high activity of SLC4A1. May be involved in translocation of SLC4A1 to the plasma membrane. The polypeptide is Glycophorin-A (Sus scrofa (Pig)).